The sequence spans 211 residues: Adenylate kinase (211 aa).

13–18 is an ATP binding site; that stretch reads GAGKGT. The NMP stretch occupies residues 33-62; it reads STGDILRVAVANKTKLGLEAKKFMDAGQLV. AMP contacts are provided by residues threonine 34, arginine 39, 60–62, 88–91, and glutamine 95; these read QLV and GFPR. Residues 129-161 are LID; that stretch reads GRRTSKVTGKIYHIKFNPPVDEKPEDLVQRADD. ATP contacts are provided by residues arginine 130 and 139–140; that span reads IY. 2 residues coordinate AMP: arginine 158 and arginine 169. Lysine 197 contacts ATP.

It belongs to the adenylate kinase family. As to quaternary structure, monomer.

Its subcellular location is the cytoplasm. The enzyme catalyses AMP + ATP = 2 ADP. It functions in the pathway purine metabolism; AMP biosynthesis via salvage pathway; AMP from ADP: step 1/1. In terms of biological role, catalyzes the reversible transfer of the terminal phosphate group between ATP and AMP. Plays an important role in cellular energy homeostasis and in adenine nucleotide metabolism. The sequence is that of Adenylate kinase from Fusobacterium nucleatum subsp. nucleatum (strain ATCC 25586 / DSM 15643 / BCRC 10681 / CIP 101130 / JCM 8532 / KCTC 2640 / LMG 13131 / VPI 4355).